A 448-amino-acid chain; its full sequence is Adenylosuccinate synthetase (448 aa).

Residues 36-42 (GDEGKGK) and 64-66 (GHT) contribute to the GTP site. Residue Asp-37 is the Proton acceptor of the active site. Residues Asp-37 and Gly-64 each coordinate Mg(2+). IMP-binding positions include 37 to 40 (DEGK), 62 to 65 (NAGH), Thr-154, Arg-168, Asn-246, Thr-261, and Arg-325. The Proton donor role is filled by His-65. Residue 321–327 (VTTKRKR) coordinates substrate. GTP-binding positions include Arg-327, 353–355 (KLD), and 436–438 (GVG).

Belongs to the adenylosuccinate synthetase family. In terms of assembly, homodimer. Mg(2+) is required as a cofactor.

It is found in the cytoplasm. The catalysed reaction is IMP + L-aspartate + GTP = N(6)-(1,2-dicarboxyethyl)-AMP + GDP + phosphate + 2 H(+). The protein operates within purine metabolism; AMP biosynthesis via de novo pathway; AMP from IMP: step 1/2. In terms of biological role, plays an important role in the de novo pathway and in the salvage pathway of purine nucleotide biosynthesis. Catalyzes the first committed step in the biosynthesis of AMP from IMP. This chain is Adenylosuccinate synthetase, found in Drosophila pseudoobscura pseudoobscura (Fruit fly).